Here is a 146-residue protein sequence, read N- to C-terminus: D-aminoacyl-tRNA deacylase (146 aa).

The Gly-cisPro motif, important for rejection of L-amino acids signature appears at 137–138 (GP).

Belongs to the DTD family. In terms of assembly, homodimer.

Its subcellular location is the cytoplasm. It catalyses the reaction glycyl-tRNA(Ala) + H2O = tRNA(Ala) + glycine + H(+). The enzyme catalyses a D-aminoacyl-tRNA + H2O = a tRNA + a D-alpha-amino acid + H(+). In terms of biological role, an aminoacyl-tRNA editing enzyme that deacylates mischarged D-aminoacyl-tRNAs. Also deacylates mischarged glycyl-tRNA(Ala), protecting cells against glycine mischarging by AlaRS. Acts via tRNA-based rather than protein-based catalysis; rejects L-amino acids rather than detecting D-amino acids in the active site. By recycling D-aminoacyl-tRNA to D-amino acids and free tRNA molecules, this enzyme counteracts the toxicity associated with the formation of D-aminoacyl-tRNA entities in vivo and helps enforce protein L-homochirality. This Variovorax paradoxus (strain S110) protein is D-aminoacyl-tRNA deacylase.